The primary structure comprises 283 residues: Acetylglutamate kinase (283 aa).

Substrate is bound by residues 63-64, Arg-85, and Asn-178; that span reads GG.

Belongs to the acetylglutamate kinase family. ArgB subfamily.

It localises to the cytoplasm. The catalysed reaction is N-acetyl-L-glutamate + ATP = N-acetyl-L-glutamyl 5-phosphate + ADP. Its pathway is amino-acid biosynthesis; L-arginine biosynthesis; N(2)-acetyl-L-ornithine from L-glutamate: step 2/4. In terms of biological role, catalyzes the ATP-dependent phosphorylation of N-acetyl-L-glutamate. This Prochlorococcus marinus (strain MIT 9301) protein is Acetylglutamate kinase.